The chain runs to 359 residues: DNA-directed RNA polymerase subunit alpha (359 aa).

The interval 1–226 is alpha N-terminal domain (alpha-NTD); that stretch reads MLISQRPSLA…ELFGLARELN (226 aa). The alpha C-terminal domain (alpha-CTD) stretch occupies residues 241–359; that stretch reads ADTIAAYAMP…GQDYAETEQL (119 aa). Residues 315 to 359 are disordered; the sequence is FDPSAAAAEYPSEGWASETETVGGLGRVEDNGYDDGQDYAETEQL. The span at 345–359 shows a compositional bias: acidic residues; that stretch reads NGYDDGQDYAETEQL.

Belongs to the RNA polymerase alpha chain family. In terms of assembly, homodimer. The RNAP catalytic core consists of 2 alpha, 1 beta, 1 beta' and 1 omega subunit. When a sigma factor is associated with the core the holoenzyme is formed, which can initiate transcription.

The catalysed reaction is RNA(n) + a ribonucleoside 5'-triphosphate = RNA(n+1) + diphosphate. In terms of biological role, DNA-dependent RNA polymerase catalyzes the transcription of DNA into RNA using the four ribonucleoside triphosphates as substrates. In Saccharopolyspora erythraea (strain ATCC 11635 / DSM 40517 / JCM 4748 / NBRC 13426 / NCIMB 8594 / NRRL 2338), this protein is DNA-directed RNA polymerase subunit alpha.